We begin with the raw amino-acid sequence, 67 residues long: Bowman-Birk type proteinase inhibitor A6 (67 aa).

6 cysteine pairs are disulfide-bonded: cysteine 9–cysteine 66, cysteine 10–cysteine 29, cysteine 13–cysteine 62, cysteine 16–cysteine 27, cysteine 36–cysteine 43, and cysteine 40–cysteine 54.

The protein belongs to the Bowman-Birk serine protease inhibitor family. Expressed in bulb (at protein level).

Serine protease inhibitor. Strongly inhibits trypsin (Ki = 4 nM) and elastase (Ki = 4.8 nM). Also inhibits chymotrypsin with a Ki of 22 nM. Does not inhibit bacterial subtilisin. The polypeptide is Bowman-Birk type proteinase inhibitor A6 (Hyacinthus orientalis (Common hyacinth)).